A 118-amino-acid polypeptide reads, in one-letter code: SPbeta prophage-derived uncharacterized protein YolB (118 aa).

This chain is SPbeta prophage-derived uncharacterized protein YolB (yolB), found in Bacillus subtilis (strain 168).